The chain runs to 426 residues: Arrestin domain-containing protein 17 (426 aa).

Residues 320 to 329 (QSAGNGSLPK) show a composition bias toward polar residues. Residues 320 to 340 (QSAGNGSLPKSSIKDSPPKWD) are disordered. A compositionally biased stretch (basic and acidic residues) spans 331-340 (SIKDSPPKWD).

It belongs to the arrestin family. In terms of assembly, interacts with tax-6. Phosphorylated. Dephosphorylated by tax-6 in vitro. Expressed from the comma stage to adulthood in the nervous system, including sensory neurons and interneurons posterior to the nerve ring, dorsal and ventral nerve cords, tail ganglia and, CEP, HSN, ASK, ADL, ASH and ASJ neurons.

Its function is as follows. Involved in several behavioral responses including chemotaxis towards lysine and adaptation to repeated osmotic stress. In addition, plays a role in resuming egg-laying and locomotion after starvation. This is Arrestin domain-containing protein 17 from Caenorhabditis elegans.